The primary structure comprises 448 residues: tRNA modification GTPase MnmE (448 aa).

(6S)-5-formyl-5,6,7,8-tetrahydrofolate is bound by residues Arg-25, Glu-82, and Lys-121. The TrmE-type G domain maps to 217 to 372 (GLTTVIAGRP…LRQEIIRRAG (156 aa)). Residue Asn-227 participates in K(+) binding. GTP-binding positions include 227–232 (NVGKSS), 246–252 (TEIPGTT), 271–274 (DTAG), and 353–355 (SAR). Mg(2+) is bound at residue Ser-231. K(+)-binding residues include Thr-246, Ile-248, and Thr-251. Thr-252 contributes to the Mg(2+) binding site. Position 448 (Lys-448) interacts with (6S)-5-formyl-5,6,7,8-tetrahydrofolate.

It belongs to the TRAFAC class TrmE-Era-EngA-EngB-Septin-like GTPase superfamily. TrmE GTPase family. In terms of assembly, homodimer. Heterotetramer of two MnmE and two MnmG subunits. It depends on K(+) as a cofactor.

It localises to the cytoplasm. Its function is as follows. Exhibits a very high intrinsic GTPase hydrolysis rate. Involved in the addition of a carboxymethylaminomethyl (cmnm) group at the wobble position (U34) of certain tRNAs, forming tRNA-cmnm(5)s(2)U34. This is tRNA modification GTPase MnmE from Methylococcus capsulatus (strain ATCC 33009 / NCIMB 11132 / Bath).